Consider the following 101-residue polypeptide: Small ubiquitin-related modifier 1 (101 aa).

At Ser-2 the chain carries N-acetylserine. Ser-2 bears the Phosphoserine mark. Residue Lys-7 forms a Glycyl lysine isopeptide (Lys-Gly) (interchain with G-Cter in SUMO1); alternate linkage. Residue Lys-7 forms a Glycyl lysine isopeptide (Lys-Gly) (interchain with G-Cter in SUMO2); alternate linkage. Ser-9 is modified (phosphoserine). Glycyl lysine isopeptide (Lys-Gly) (interchain with G-Cter in SUMO2) cross-links involve residues Lys-16, Lys-17, and Lys-23. Residues 16–25 (KKEGEYIKLK) form a (Microbial infection) Interaction with Tula hantavirus region. Residues 20–97 (EYIKLKVIGQ…IEVYQEQTGG (78 aa)) form the Ubiquitin-like domain. Lys-25 participates in a covalent cross-link: Glycyl lysine isopeptide (Lys-Gly) (interchain with G-Cter in SUMO1). Ser-32 carries the post-translational modification Phosphoserine. Residues Lys-37, Lys-39, Lys-45, and Lys-46 each participate in a glycyl lysine isopeptide (Lys-Gly) (interchain with G-Cter in SUMO2) cross-link. The tract at residues 37–40 (KVKM) is (Microbial infection) Interaction with Tula hantavirus. A Glycyl lysine isopeptide (Gly-Lys) (interchain with K-? in acceptor proteins) cross-link involves residue Gly-97. The propeptide occupies 98–101 (HSTV).

The protein belongs to the ubiquitin family. SUMO subfamily. In terms of assembly, covalently attached to KCNB1; UBE2I increases cross-linking with KCNB1 and PIAS1 decreases cross-links with KCNB1. Interacts with SAE2, RANBP2, PIAS1 and PIAS2. Interacts with PRKN. Covalently attached to a number of proteins such as IKFZ1, PML, RANGAP1, HIPK2, SP100, p53, p73-alpha, MDM2, JUN, DNMT3B and TDG. Also interacts with HIF1A, HIPK2, HIPK3, CHD3, EXOSC9, RAD51 and RAD52. Interacts with USP25 (via ts SIM domain); the interaction weakly sumoylates USP25. Interacts with SIMC1, CASP8AP2, RNF111 and SOBP (via SIM domains). Interacts with BHLHE40/DEC1. Interacts with RWDD3. Interacts with UBE2I/UBC9 and this interaction is enhanced in the presence of RWDD3. Interacts with MTA1. Interacts with SENP2. Interacts with HINT1. (Microbial infection) Interacts with Epstein-barr virus BGLF4. As to quaternary structure, (Microbial infection) Interacts (via N-terminus) with Tula hantavirus nucleoprotein. In terms of assembly, (Microbial infection) Interacts (via N-terminus) with Hantaan hantavirus nucleoprotein. Cleavage of precursor form by SENP1 or SENP2 is necessary for function. In terms of processing, polymeric SUMO1 chains undergo polyubiquitination by RNF4.

The protein localises to the nucleus membrane. It localises to the nucleus speckle. The protein resides in the cytoplasm. Its subcellular location is the nucleus. It is found in the PML body. The protein localises to the cell membrane. Functionally, ubiquitin-like protein that can be covalently attached to proteins as a monomer or a lysine-linked polymer. Covalent attachment via an isopeptide bond to its substrates requires prior activation by the E1 complex SAE1-SAE2 and linkage to the E2 enzyme UBE2I, and can be promoted by E3 ligases such as PIAS1-4, RANBP2 or CBX4. This post-translational modification on lysine residues of proteins plays a crucial role in a number of cellular processes such as nuclear transport, DNA replication and repair, mitosis and signal transduction. Involved for instance in targeting RANGAP1 to the nuclear pore complex protein RANBP2. Covalently attached to the voltage-gated potassium channel KCNB1; this modulates the gating characteristics of KCNB1. Polymeric SUMO1 chains are also susceptible to polyubiquitination which functions as a signal for proteasomal degradation of modified proteins. May also regulate a network of genes involved in palate development. Covalently attached to ZFHX3. In Homo sapiens (Human), this protein is Small ubiquitin-related modifier 1 (SUMO1).